The following is a 655-amino-acid chain: MSVRNIFADESHDIYTVRTHADGPDGELPLTAEMLINRPSGDLFGMTMNAGMGWSPDELDRDGILLLSTLGGLRGADGKPVALALHQGHYELDIQMKAAAEVIKANHALPYAVYVSDPCDGRTQGTTGMFDSLPYRNDASMVMRRLIRSLPDAKAVIGVASCDKGLPATMMALAAQHNIATVLVPGGATLPAKDGEDNGKVQTIGARFANGELSLQDARRAGCKACASSGGGCQFLGTAGTSQVVAEGLGLAIPHSALAPSGEPVWREIARASARAALNLSQKGITTREILTDKAIENAMTVHAAFGGSTNLLLHIPAIAHQAGCHIPTVDDWIRINKRVPRLVSVLPNGPVYHPTVNAFMAGGVPEVMLHLRSLGLLHEDVMTVTGSTLKENLDWWEHSERRQRFKQLLLDQEQINADEVIMSPQQAKARGLTSTITFPVGNIAPEGSVIKSTAIDPSMIDEQGIYYHKGVAKVYLSEKSAIYDIKHDKIKAGDILVIIGVGPSGTGMEETYQVTSALKHLSYGKHVSLITDARFSGVSTGACIGHVGPEALAGGPIGKLRTGDLIEIKIDCRELHGEVNFLGTRSDEQLPSQEEATAILNARPSHQDLLPDPELPDDTRLWAMLQAVSGGTWTGCIYDVNKIGAALRDFMNKN.

It belongs to the IlvD/Edd family.

The enzyme catalyses D-xylonate = 2-dehydro-3-deoxy-D-arabinonate + H2O. With respect to regulation, activity is increased in the presence of Mn(+) and Mg(2+). Inhibited by thiol compounds. Catalyzes the dehydration of D-xylonic acid to form 2-dehydro-3-deoxy-D-pentonate. The chain is D-xylonate dehydratase YjhG (yjhG) from Escherichia coli (strain K12).